A 525-amino-acid chain; its full sequence is GMP synthase [glutamine-hydrolyzing] (525 aa).

Residues 3–200 (KILILDFGSQ…VLHVAGCKPS (198 aa)) enclose the Glutamine amidotransferase type-1 domain. C79 functions as the Nucleophile in the catalytic mechanism. Residues H174 and E176 contribute to the active site. The GMPS ATP-PPase domain occupies 201-393 (WTMPNYIDEA…LGLPHDMVYR (193 aa)). 228-234 (SGGVDSS) serves as a coordination point for ATP.

As to quaternary structure, homodimer.

The enzyme catalyses XMP + L-glutamine + ATP + H2O = GMP + L-glutamate + AMP + diphosphate + 2 H(+). It participates in purine metabolism; GMP biosynthesis; GMP from XMP (L-Gln route): step 1/1. In terms of biological role, catalyzes the synthesis of GMP from XMP. The polypeptide is GMP synthase [glutamine-hydrolyzing] (Chromobacterium violaceum (strain ATCC 12472 / DSM 30191 / JCM 1249 / CCUG 213 / NBRC 12614 / NCIMB 9131 / NCTC 9757 / MK)).